The primary structure comprises 878 residues: Phosphoenolpyruvate carboxylase (878 aa).

Catalysis depends on residues His137 and Lys545.

Belongs to the PEPCase type 1 family. Mg(2+) is required as a cofactor.

The catalysed reaction is oxaloacetate + phosphate = phosphoenolpyruvate + hydrogencarbonate. Its function is as follows. Forms oxaloacetate, a four-carbon dicarboxylic acid source for the tricarboxylic acid cycle. The protein is Phosphoenolpyruvate carboxylase of Photorhabdus laumondii subsp. laumondii (strain DSM 15139 / CIP 105565 / TT01) (Photorhabdus luminescens subsp. laumondii).